The following is a 300-amino-acid chain: Ribosomal protein bS6--L-glutamate ligase (300 aa).

An ATP-grasp domain is found at Met104–Glu287. ATP contacts are provided by residues Lys141, Glu178–Tyr179, Asp187, and Arg211–Asn213. Residues Asp248, Glu260, and Asn262 each contribute to the Mg(2+) site. Mn(2+) is bound by residues Asp248, Glu260, and Asn262.

This sequence belongs to the RimK family. Requires Mg(2+) as cofactor. It depends on Mn(2+) as a cofactor.

Functionally, an L-glutamate ligase that catalyzes the ATP-dependent post-translational addition of glutamate residues to the C-terminus of ribosomal protein bS6 (RpsF). Is also able to catalyze the synthesis of poly-alpha-glutamate in vitro, via ATP hydrolysis from unprotected glutamate as substrate. The number of glutamate residues added to either RpsF or to poly-alpha-glutamate changes with pH. The sequence is that of Ribosomal protein bS6--L-glutamate ligase from Shigella dysenteriae serotype 1 (strain Sd197).